The sequence spans 283 residues: N-terminal Xaa-Pro-Lys N-methyltransferase 2 (283 aa).

Residues glycine 124, arginine 129, aspartate 146, 174-175 (LQ), and glutamine 190 contribute to the S-adenosyl-L-methionine site.

Belongs to the methyltransferase superfamily. NTM1 family.

The protein localises to the nucleus. The catalysed reaction is N-terminal L-alanyl-L-prolyl-L-lysyl-[protein] + S-adenosyl-L-methionine = N-terminal N-methyl-L-alanyl-L-prolyl-L-lysyl-[protein] + S-adenosyl-L-homocysteine + H(+). It catalyses the reaction N-terminal L-prolyl-L-prolyl-L-lysyl-[protein] + S-adenosyl-L-methionine = N-terminal N-methyl-L-prolyl-L-prolyl-L-lysyl-[protein] + S-adenosyl-L-homocysteine + H(+). It carries out the reaction N-terminal L-seryl-L-prolyl-L-lysyl-[protein] + S-adenosyl-L-methionine = N-terminal N-methyl-L-seryl-L-prolyl-L-lysyl-[protein] + S-adenosyl-L-homocysteine + H(+). Alpha N-methyltransferase that methylates the N-terminus of target proteins containing the N-terminal motif [Ala/Pro/Ser]-Pro-Lys when the initiator Met is cleaved. Specifically catalyzes monomethylation of exposed alpha-amino group of Ala or Ser residue in the [Ala/Ser]-Pro-Lys motif and Pro in the Pro-Pro-Lys motif. Predominantly functions as a mono-methyltransferase but is also able to di-/tri-methylate the GPKRIA peptide and di-methylate the PPKRIA peptide (in vitro). May activate NTMT1 by priming its substrates for trimethylation. This is N-terminal Xaa-Pro-Lys N-methyltransferase 2 (Ntmt2) from Mus musculus (Mouse).